Here is a 197-residue protein sequence, read N- to C-terminus: Nucleoid occlusion factor SlmA (197 aa).

The HTH tetR-type domain occupies 6–66 (NDRRTQILQA…GLIEFIEESL (61 aa)). A DNA-binding region (H-T-H motif) is located at residues 29-48 (TTAALAKQVGVSEAALYRHF).

It belongs to the nucleoid occlusion factor SlmA family. As to quaternary structure, homodimer. Interacts with FtsZ.

The protein resides in the cytoplasm. The protein localises to the nucleoid. Required for nucleoid occlusion (NO) phenomenon, which prevents Z-ring formation and cell division over the nucleoid. Acts as a DNA-associated cell division inhibitor that binds simultaneously chromosomal DNA and FtsZ, and disrupts the assembly of FtsZ polymers. SlmA-DNA-binding sequences (SBS) are dispersed on non-Ter regions of the chromosome, preventing FtsZ polymerization at these regions. This is Nucleoid occlusion factor SlmA from Marinomonas sp. (strain MWYL1).